The chain runs to 140 residues: Sex-regulated protein janus-B (140 aa).

Arg-42 provides a ligand contact to substrate. The active-site Proton acceptor is His-69. 110–112 (CKT) is a binding site for substrate.

This sequence belongs to the janus family.

Functionally, janA and janB regulate somatic sex differentiation. The protein is Sex-regulated protein janus-B (janB) of Drosophila pseudoobscura pseudoobscura (Fruit fly).